The following is a 211-amino-acid chain: Protein crossbronx-like (211 aa).

A UBC core domain is found at 17–177 (NQGYQILAEY…VRNSILWSCK (161 aa)).

This sequence belongs to the ubiquitin-conjugating enzyme family. FTS subfamily.

The chain is Protein crossbronx-like from Drosophila grimshawi (Hawaiian fruit fly).